The primary structure comprises 189 residues: Probable nicotinate-nucleotide adenylyltransferase (189 aa).

It belongs to the NadD family.

The enzyme catalyses nicotinate beta-D-ribonucleotide + ATP + H(+) = deamido-NAD(+) + diphosphate. The protein operates within cofactor biosynthesis; NAD(+) biosynthesis; deamido-NAD(+) from nicotinate D-ribonucleotide: step 1/1. Catalyzes the reversible adenylation of nicotinate mononucleotide (NaMN) to nicotinic acid adenine dinucleotide (NaAD). The chain is Probable nicotinate-nucleotide adenylyltransferase from Bacillus cereus (strain Q1).